Reading from the N-terminus, the 178-residue chain is Fibroin heavy chain (178 aa).

The signal sequence occupies residues 1 to 21 (MRVKTFVILCCALQYVAYTNA). The interval 149 to 178 (AVGAGAGAGAAAGSGAGAGAGYGAASGAGA) is highly repetitive.

As to quaternary structure, silk fibroin elementary unit consists in a disulfide-linked heavy and light chain and a p25 glycoprotein in molar ratios of 6:6:1. This results in a complex of approximately 2.3 MDa. In terms of processing, the interchain disulfide bridge is essential for the intracellular transport and secretion of fibroin. As to expression, produced exclusively in the posterior (PSG) section of silk glands, which are essentially modified salivary glands.

Its function is as follows. Core component of the silk filament; a strong, insoluble and chemically inert fiber. This is Fibroin heavy chain (FIBH) from Bombyx mandarina (Wild silk moth).